Here is a 411-residue protein sequence, read N- to C-terminus: Argininosuccinate synthase (411 aa).

ATP is bound by residues 10-18 (AYSGGLDTS) and A37. Y89 and S94 together coordinate L-citrulline. Position 119 (G119) interacts with ATP. Residues T121, N125, and D126 each contribute to the L-aspartate site. N125 contacts L-citrulline. Residues R129, S178, S187, E263, and Y275 each contribute to the L-citrulline site.

This sequence belongs to the argininosuccinate synthase family. Type 1 subfamily. Homotetramer.

The protein localises to the cytoplasm. The enzyme catalyses L-citrulline + L-aspartate + ATP = 2-(N(omega)-L-arginino)succinate + AMP + diphosphate + H(+). Its pathway is amino-acid biosynthesis; L-arginine biosynthesis; L-arginine from L-ornithine and carbamoyl phosphate: step 2/3. In Aeromonas hydrophila subsp. hydrophila (strain ATCC 7966 / DSM 30187 / BCRC 13018 / CCUG 14551 / JCM 1027 / KCTC 2358 / NCIMB 9240 / NCTC 8049), this protein is Argininosuccinate synthase.